We begin with the raw amino-acid sequence, 291 residues long: U3 small nucleolar ribonucleoprotein protein IMP4 (291 aa).

The Brix domain occupies 83 to 264 (PKVMITTSRD…LYMIRLGTLE (182 aa)).

As to quaternary structure, part of the small subunit (SSU) processome, composed of more than 70 proteins and the RNA chaperone small nucleolar RNA (snoRNA) U3. Component of a heterotrimeric complex containing IMP3, IMP4 and MPHOSPH10. Interacts with MPHOSPH10.

It is found in the nucleus. Its subcellular location is the nucleolus. Its function is as follows. Component of the 60-80S U3 small nucleolar ribonucleoprotein (U3 snoRNP). Required for the early cleavages during pre-18S ribosomal RNA processing. Part of the small subunit (SSU) processome, first precursor of the small eukaryotic ribosomal subunit. During the assembly of the SSU processome in the nucleolus, many ribosome biogenesis factors, an RNA chaperone and ribosomal proteins associate with the nascent pre-rRNA and work in concert to generate RNA folding, modifications, rearrangements and cleavage as well as targeted degradation of pre-ribosomal RNA by the RNA exosome. The protein is U3 small nucleolar ribonucleoprotein protein IMP4 of Homo sapiens (Human).